Reading from the N-terminus, the 367-residue chain is Indole glucosinolate O-methyltransferase 5 (367 aa).

S-adenosyl-L-homocysteine is bound by residues Gly209, Asp232, Asp252, Met253, and Lys266. Residue His270 is the Proton acceptor of the active site.

Belongs to the class I-like SAM-binding methyltransferase superfamily. Cation-independent O-methyltransferase family.

It functions in the pathway secondary metabolite biosynthesis. In terms of biological role, involved in indole glucosinolate biosynthesis. Catalyzes methoxylation reactions of the glucosinolate indole ring. Converts the hydroxy intermediates 4-hydroxy-indol-3-yl-methylglucosinolate (4OH-I3M) and 1-hydroxy-indol-3-yl-methylglucosinolate (1OH-I3M) to 4-methoxy-indol-3-yl-methylglucosinolate (4MO-I3M) and 1-methoxy-indol-3-yl-methylglucosinolate, respectively. This is Indole glucosinolate O-methyltransferase 5 from Arabidopsis thaliana (Mouse-ear cress).